Reading from the N-terminus, the 174-residue chain is MIYARANPELINPVTVPTEISEVVLVLANTIRRSPAFTGILKPVTIPLNTVPTDINAEDATSNSTIAPAKGSNTPGFAASSLYTCVLKNIGSNTAEIATETWNAVANDVITVSRGALHAIFGNNPCTGPVKSKLTPTNVTLGDDTPKSYDAPVSAIPPPATATTANATGVKPLE.

Residues 137–174 form a disordered region; it reads TNVTLGDDTPKSYDAPVSAIPPPATATTANATGVKPLE.

This is an uncharacterized protein from Acanthamoeba polyphaga (Amoeba).